Reading from the N-terminus, the 319-residue chain is Tyrosine--tRNA ligase (319 aa).

Tyr35 is an L-tyrosine binding site. The 'HIGH' region signature appears at 40–48 (PSGKIHLGH). L-tyrosine-binding residues include Tyr156, Gln160, Asp163, and Gln178. Positions 213–217 (KMSSS) match the 'KMSKS' region motif. Position 216 (Ser216) interacts with ATP.

It belongs to the class-I aminoacyl-tRNA synthetase family. TyrS type 3 subfamily. As to quaternary structure, homodimer.

It localises to the cytoplasm. It catalyses the reaction tRNA(Tyr) + L-tyrosine + ATP = L-tyrosyl-tRNA(Tyr) + AMP + diphosphate + H(+). Its function is as follows. Catalyzes the attachment of tyrosine to tRNA(Tyr) in a two-step reaction: tyrosine is first activated by ATP to form Tyr-AMP and then transferred to the acceptor end of tRNA(Tyr). This chain is Tyrosine--tRNA ligase, found in Methanobrevibacter smithii (strain ATCC 35061 / DSM 861 / OCM 144 / PS).